Reading from the N-terminus, the 141-residue chain is Cystatin-13 (141 aa).

Residues 1 to 24 form the signal peptide; it reads MARFLQTLLFLVIMVEFVSRRVEA. The secondary area of contact stretch occupies residues 76 to 80; that stretch reads QITDS. Disulfide bonds link cysteine 94–cysteine 104 and cysteine 118–cysteine 138.

Belongs to the cystatin family. As to expression, expressed exclusively in testis. Found in spermatagonia, spermatocytes, round spermatids, elongating spermatids and spermatozoa.

It is found in the secreted. It localises to the cytoplasm. May perform a specialized role during sperm development and maturation. In Mus musculus (Mouse), this protein is Cystatin-13.